A 546-amino-acid chain; its full sequence is MAWPKLPAPWLLLCTWLPAGCLSLLVTVQHTERYVTLFASIILKCDYTTSAQLQDVVVTWRFKSFCKDPIFDYYSASYQAALSLGQDPSNDCNDNQREVRIVAQRRGQNEPVLGVDYRQRKITIQNRADLVINEVMWWDHGVYYCTIEAPGDTSGDPDKEVKLIVLHWLTVIFIILGALLLLLLIGVCWCQCCPQYCCCYIRCPCCPARCCCPEEALARHRYMKQAQALGPQMMEKPLYWGADRSSQVSSYPMHPLLQRDLSLRSSLPQMPMTQTTNHPPIANGVLEYLEKELRNLNLAQPLPPDLKARFGHPCSMLSSLGSEVVERRFIHLPPLIRDLSSSRRTSDSLHQQWLTPIPSRPWDLREGRRQHHYPDFHQELQDRGPKSWALERRELDPSWSGRHRSSRLNGSPIHWSDRDSLSDVPSSIEARWQPSHPPFRSRCQERPRRPSPRESTQRHGRRRRHRSYSPPLPSGLSSWSSEEDKERQPQSWGAHRRRSHSPHWPEEKPPSYRSLDVTPGKNSRKKGSVERRSEKDSSHSGRSVVI.

A signal peptide spans 1 to 23; it reads MAWPKLPAPWLLLCTWLPAGCLS. The 139-residue stretch at 24-162 folds into the Ig-like V-type domain; that stretch reads LLVTVQHTER…TSGDPDKEVK (139 aa). Residues 24-167 lie on the Extracellular side of the membrane; the sequence is LLVTVQHTER…DKEVKLIVLH (144 aa). Cys-45 and Cys-145 are disulfide-bonded. The chain crosses the membrane as a helical span at residues 168 to 188; sequence WLTVIFIILGALLLLLLIGVC. Topologically, residues 189-546 are cytoplasmic; that stretch reads WCQCCPQYCC…SSHSGRSVVI (358 aa). Residues 399–546 are disordered; it reads WSGRHRSSRL…SSHSGRSVVI (148 aa). Over residues 442 to 457 the composition is skewed to basic and acidic residues; that stretch reads RCQERPRRPSPRESTQ. Residues 458-467 are compositionally biased toward basic residues; sequence RHGRRRRHRS. 2 positions are modified to phosphoserine: Ser-499 and Ser-501. A compositionally biased stretch (basic and acidic residues) spans 527–539; sequence GSVERRSEKDSSH.

This sequence belongs to the immunoglobulin superfamily. LISCH7 family. Homooligomer. Interacts with MARVELD2 and OCLN; the interaction is required to recruit MARVELD2 to tricellular contacts. Interacts (via C-terminus) with TRA2A, TRA2B and SRSF1. Interacts with PLSCR1.

Its subcellular location is the cell membrane. It is found in the cell junction. The protein localises to the tight junction. The protein resides in the nucleus. It localises to the cytoplasm. In terms of biological role, maintains epithelial barrier function by recruiting MARVELD2/tricellulin to tricellular tight junctions (tTJs). Crucial for normal hearing by maintaining the structural and functional integrity of tTJs, which are critical for the survival of auditory neurosensory HCs. Mediates fatty acids and lipoproteins-stimulated CCK/cholecystokinin secretion in the small intestine. In the inner ear, may regulate alternative pre-mRNA splicing via binding to TRA2A, TRA2B and SRSF1. This Pongo abelii (Sumatran orangutan) protein is Immunoglobulin-like domain-containing receptor 1 (ILDR1).